We begin with the raw amino-acid sequence, 137 residues long: Protein ApaG (137 aa).

An ApaG domain is found at 2 to 126; the sequence is PKYQFQVQVQ…FVLEAFSPGQ (125 aa).

The sequence is that of Protein ApaG from Acidovorax sp. (strain JS42).